A 310-amino-acid chain; its full sequence is Olfactory receptor 4C16 (310 aa).

Topologically, residues 1 to 23 are extracellular; that stretch reads MQLNNNVTEFILLGLTQDPFWKK. N-linked (GlcNAc...) asparagine glycosylation occurs at Asn-6. Residues 24–47 traverse the membrane as a helical segment; that stretch reads IVFVIFLRLYLGTLLGNLLIIISV. Residues 48–55 lie on the Cytoplasmic side of the membrane; sequence KTSQALKN. Residues 56-77 traverse the membrane as a helical segment; it reads PMFFFLFYLSLSDTCLSTSITP. Topologically, residues 78–98 are extracellular; the sequence is RMIVDALLKKTTISFSECMIQ. A disulfide bridge connects residues Cys-95 and Cys-187. The helical transmembrane segment at 99 to 118 threads the bilayer; it reads VFSSHVFGCLEIFILILTAV. Over 119-137 the chain is Cytoplasmic; the sequence is DRYVDICKPLHYMTIISQW. The chain crosses the membrane as a helical span at residues 138–156; it reads VCGVLMAVAWVGSCVHSLV. Over 157-193 the chain is Extracellular; sequence QIFLALSLPFCGPNVINHCFCDLQPLLKQACSETYVV. A helical transmembrane segment spans residues 194–217; the sequence is NLLLVSNSGAICAVSYVMLIFSYV. The Cytoplasmic segment spans residues 218 to 233; sequence IFLHSLRNHSAEVIKK. The chain crosses the membrane as a helical span at residues 234 to 256; the sequence is ALSTCVSHIIVVILFFGPCIFMY. Topologically, residues 257 to 267 are extracellular; that stretch reads TCLATVFPMDK. Residues 268 to 287 form a helical membrane-spanning segment; that stretch reads MIAVFYTVGTSFLNPVIYTL. Topologically, residues 288–310 are cytoplasmic; that stretch reads KNTEVKSAMRKLWSKKLITDDKR.

It belongs to the G-protein coupled receptor 1 family.

The protein resides in the cell membrane. Functionally, odorant receptor. The polypeptide is Olfactory receptor 4C16 (OR4C16) (Homo sapiens (Human)).